The primary structure comprises 192 residues: Urease accessory protein UreE (192 aa).

The disordered stretch occupies residues 170–192 (EHHGHSHSHSHDHVHDEKCGHKH). Residues 178–192 (HSHDHVHDEKCGHKH) are compositionally biased toward basic and acidic residues.

Belongs to the UreE family.

It localises to the cytoplasm. Functionally, involved in urease metallocenter assembly. Binds nickel. Probably functions as a nickel donor during metallocenter assembly. In Cupriavidus necator (strain ATCC 17699 / DSM 428 / KCTC 22496 / NCIMB 10442 / H16 / Stanier 337) (Ralstonia eutropha), this protein is Urease accessory protein UreE.